Consider the following 622-residue polypeptide: DNA mismatch repair protein MutL (622 aa).

Belongs to the DNA mismatch repair MutL/HexB family.

This protein is involved in the repair of mismatches in DNA. It is required for dam-dependent methyl-directed DNA mismatch repair. May act as a 'molecular matchmaker', a protein that promotes the formation of a stable complex between two or more DNA-binding proteins in an ATP-dependent manner without itself being part of a final effector complex. In Prosthecochloris aestuarii (strain DSM 271 / SK 413), this protein is DNA mismatch repair protein MutL.